The following is a 98-amino-acid chain: NADH-ubiquinone oxidoreductase chain 4L (98 aa).

The next 3 helical transmembrane spans lie at 1–21 (MSPV…GLAF), 26–46 (LLSA…AIAL), and 61–81 (MILL…LVAA).

This sequence belongs to the complex I subunit 4L family.

It is found in the mitochondrion membrane. It carries out the reaction a ubiquinone + NADH + 5 H(+)(in) = a ubiquinol + NAD(+) + 4 H(+)(out). Its function is as follows. Core subunit of the mitochondrial membrane respiratory chain NADH dehydrogenase (Complex I) which catalyzes electron transfer from NADH through the respiratory chain, using ubiquinone as an electron acceptor. Part of the enzyme membrane arm which is embedded in the lipid bilayer and involved in proton translocation. This chain is NADH-ubiquinone oxidoreductase chain 4L (MT-ND4L), found in Squalus acanthias (Spiny dogfish).